The chain runs to 479 residues: Shugoshin (479 aa).

Residues 36–76 (SLRIRSLESEVSNLLSENVSLREQIITLTQELERFEAARTL) adopt a coiled-coil conformation. Disordered regions lie at residues 109-145 (SRAV…GFLD), 220-247 (EHSL…QADT), and 263-479 (AKRK…SMPP). Positions 123-132 (QSRESGPKEV) are enriched in basic and acidic residues. Over residues 270 to 286 (EDDESLFESSPSEDDEF) the composition is skewed to acidic residues. Polar residues-rich tracts occupy residues 290–303 (RPAQ…QNEH) and 318–328 (QSPTLSSQNDH). Basic and acidic residues-rich tracts occupy residues 335–352 (PQSE…RVLE) and 379–388 (GYNEKSEKPL). A compositionally biased stretch (polar residues) spans 400–411 (KNASPKKSSTRT).

This sequence belongs to the shugoshin family.

The protein localises to the nucleus. The protein resides in the chromosome. Its subcellular location is the centromere. Plays a central role in chromosome cohesion during cell division by preventing premature dissociation of cohesin complex from centromeres after prophase, when most of cohesin complex dissociates from chromosomes arms. This is Shugoshin (sgo1) from Emericella nidulans (strain FGSC A4 / ATCC 38163 / CBS 112.46 / NRRL 194 / M139) (Aspergillus nidulans).